Here is a 143-residue protein sequence, read N- to C-terminus: Spliceosomal protein DIB1 (143 aa).

Ala2 carries the post-translational modification N-acetylalanine.

It belongs to the DIM1 family. Component of the U4/U6-U5 tri-snRNP complex composed of the U4, U6 and U5 snRNAs and at least PRP3, PRP4, PRP6, PRP8, PRP18, PRP31, PRP38, SNU13, SNU23, SNU66, SNU114, SPP381, SMB1, SMD1, SMD2, SMD3, SMX2, SMX3, LSM2, LSM3, LSM4, LSM5, LSM6, LSM7, LSM8, BRR2 and DIB1.

It localises to the nucleus. In terms of biological role, essential role in pre-mRNA splicing. Also essential for entry into mitosis (G2/M progression) as well as for chromosome segregation during mitosis. The polypeptide is Spliceosomal protein DIB1 (DIB1) (Saccharomyces cerevisiae (strain ATCC 204508 / S288c) (Baker's yeast)).